A 117-amino-acid chain; its full sequence is Synaptobrevin homolog 1 (117 aa).

The tract at residues 1–30 is disordered; it reads MSSSTPFDPYALSEHDEERPQNVQSKSRTA. Residues 1–94 are Cytoplasmic-facing; sequence MSSSTPFDPY…MWYKDLKMKM (94 aa). Residues 28 to 88 form the v-SNARE coiled-coil homology domain; it reads RTAELQAEID…NRVRKAMWYK (61 aa). Lys63 is covalently cross-linked (Glycyl lysine isopeptide (Lys-Gly) (interchain with G-Cter in ubiquitin)). The S-palmitoyl cysteine moiety is linked to residue Cys95. The chain crosses the membrane as a helical; Anchor for type IV membrane protein span at residues 95-111; the sequence is CLALVIIILLVVIIVPI. The Vesicular portion of the chain corresponds to 112 to 117; it reads AVHFSR.

Belongs to the synaptobrevin family. In terms of processing, palmitoylated by SWF1.

Its subcellular location is the endomembrane system. In terms of biological role, SNC1 and SNC2 are vesicle-targeting proteins essential for normal secretory traffic between the Golgi and the plasma membrane. They may also be involved in vesicle fusion. This chain is Synaptobrevin homolog 1 (SNC1), found in Saccharomyces cerevisiae (strain ATCC 204508 / S288c) (Baker's yeast).